We begin with the raw amino-acid sequence, 438 residues long: Chaperone SurA (438 aa).

Positions 1 to 28 are cleaved as a signal peptide; it reads MKTMNPYIRHLILLICCLGGMLAQPLSA. 2 consecutive PpiC domains span residues 181–282 and 292–390; these read EEEY…KLVS and VQQT…QVLE.

It localises to the periplasm. The catalysed reaction is [protein]-peptidylproline (omega=180) = [protein]-peptidylproline (omega=0). Its function is as follows. Chaperone involved in the correct folding and assembly of outer membrane proteins. Recognizes specific patterns of aromatic residues and the orientation of their side chains, which are found more frequently in integral outer membrane proteins. May act in both early periplasmic and late outer membrane-associated steps of protein maturation. This is Chaperone SurA from Dechloromonas aromatica (strain RCB).